The primary structure comprises 779 residues: Endonuclease MutS2 (779 aa).

328–335 (GPNTGGKT) serves as a coordination point for ATP. The 76-residue stretch at 704–779 (LDLRGKRYEE…GSGATIVTLG (76 aa)) folds into the Smr domain.

It belongs to the DNA mismatch repair MutS family. MutS2 subfamily. In terms of assembly, homodimer. Binds to stalled ribosomes, contacting rRNA.

Functionally, endonuclease that is involved in the suppression of homologous recombination and thus may have a key role in the control of bacterial genetic diversity. In terms of biological role, acts as a ribosome collision sensor, splitting the ribosome into its 2 subunits. Detects stalled/collided 70S ribosomes which it binds and splits by an ATP-hydrolysis driven conformational change. Acts upstream of the ribosome quality control system (RQC), a ribosome-associated complex that mediates the extraction of incompletely synthesized nascent chains from stalled ribosomes and their subsequent degradation. Probably generates substrates for RQC. The protein is Endonuclease MutS2 of Streptococcus pyogenes serotype M18 (strain MGAS8232).